We begin with the raw amino-acid sequence, 162 residues long: uncharacterized protein (162 aa).

This is an uncharacterized protein from Acidianus sp. F28 (AFV-2).